A 175-amino-acid polypeptide reads, in one-letter code: Endoribonuclease YbeY (175 aa).

Zn(2+) is bound by residues His137, His141, and His147.

Belongs to the endoribonuclease YbeY family. It depends on Zn(2+) as a cofactor.

The protein localises to the cytoplasm. Its function is as follows. Single strand-specific metallo-endoribonuclease involved in late-stage 70S ribosome quality control and in maturation of the 3' terminus of the 16S rRNA. This chain is Endoribonuclease YbeY, found in Burkholderia ambifaria (strain ATCC BAA-244 / DSM 16087 / CCUG 44356 / LMG 19182 / AMMD) (Burkholderia cepacia (strain AMMD)).